The chain runs to 315 residues: Aspartate carbamoyltransferase catalytic subunit (315 aa).

2 residues coordinate carbamoyl phosphate: Arg-65 and Thr-66. Lys-93 is a binding site for L-aspartate. Arg-115, His-145, and Gln-148 together coordinate carbamoyl phosphate. 2 residues coordinate L-aspartate: Arg-179 and Arg-234. 2 residues coordinate carbamoyl phosphate: Gly-275 and Pro-276.

Belongs to the aspartate/ornithine carbamoyltransferase superfamily. ATCase family. In terms of assembly, heterododecamer (2C3:3R2) of six catalytic PyrB chains organized as two trimers (C3), and six regulatory PyrI chains organized as three dimers (R2).

The catalysed reaction is carbamoyl phosphate + L-aspartate = N-carbamoyl-L-aspartate + phosphate + H(+). Its pathway is pyrimidine metabolism; UMP biosynthesis via de novo pathway; (S)-dihydroorotate from bicarbonate: step 2/3. Functionally, catalyzes the condensation of carbamoyl phosphate and aspartate to form carbamoyl aspartate and inorganic phosphate, the committed step in the de novo pyrimidine nucleotide biosynthesis pathway. This is Aspartate carbamoyltransferase catalytic subunit from Xanthomonas axonopodis pv. citri (strain 306).